We begin with the raw amino-acid sequence, 211 residues long: ATP phosphoribosyltransferase (211 aa).

It belongs to the ATP phosphoribosyltransferase family. Short subfamily. As to quaternary structure, heteromultimer composed of HisG and HisZ subunits.

It is found in the cytoplasm. It carries out the reaction 1-(5-phospho-beta-D-ribosyl)-ATP + diphosphate = 5-phospho-alpha-D-ribose 1-diphosphate + ATP. The protein operates within amino-acid biosynthesis; L-histidine biosynthesis; L-histidine from 5-phospho-alpha-D-ribose 1-diphosphate: step 1/9. Its function is as follows. Catalyzes the condensation of ATP and 5-phosphoribose 1-diphosphate to form N'-(5'-phosphoribosyl)-ATP (PR-ATP). Has a crucial role in the pathway because the rate of histidine biosynthesis seems to be controlled primarily by regulation of HisG enzymatic activity. The sequence is that of ATP phosphoribosyltransferase from Pseudomonas fluorescens (strain SBW25).